The sequence spans 509 residues: Bifunctional purine biosynthesis protein PurH (509 aa).

Residues 1–144 (MKRALISVSD…KNYAAVTVVV (144 aa)) form the MGS-like domain.

Belongs to the PurH family.

The catalysed reaction is (6R)-10-formyltetrahydrofolate + 5-amino-1-(5-phospho-beta-D-ribosyl)imidazole-4-carboxamide = 5-formamido-1-(5-phospho-D-ribosyl)imidazole-4-carboxamide + (6S)-5,6,7,8-tetrahydrofolate. It catalyses the reaction IMP + H2O = 5-formamido-1-(5-phospho-D-ribosyl)imidazole-4-carboxamide. It functions in the pathway purine metabolism; IMP biosynthesis via de novo pathway; 5-formamido-1-(5-phospho-D-ribosyl)imidazole-4-carboxamide from 5-amino-1-(5-phospho-D-ribosyl)imidazole-4-carboxamide (10-formyl THF route): step 1/1. Its pathway is purine metabolism; IMP biosynthesis via de novo pathway; IMP from 5-formamido-1-(5-phospho-D-ribosyl)imidazole-4-carboxamide: step 1/1. The polypeptide is Bifunctional purine biosynthesis protein PurH (Listeria monocytogenes serotype 4b (strain CLIP80459)).